A 247-amino-acid polypeptide reads, in one-letter code: Eukaryotic translation initiation factor 6 (247 aa).

Phosphoserine; by CK1 is present on residues Ser-174 and Ser-175.

It belongs to the eIF-6 family. In terms of assembly, monomer. Associates with the 60S ribosomal subunit. In terms of processing, phosphorylation at Ser-174 and Ser-175 promotes nuclear export.

It localises to the cytoplasm. The protein localises to the nucleus. The protein resides in the nucleolus. In terms of biological role, binds to the 60S ribosomal subunit and prevents its association with the 40S ribosomal subunit to form the 80S initiation complex in the cytoplasm. Is also involved in ribosome biogenesis. Associates with pre-60S subunits in the nucleus and is involved in its nuclear export. This Talaromyces stipitatus (strain ATCC 10500 / CBS 375.48 / QM 6759 / NRRL 1006) (Penicillium stipitatum) protein is Eukaryotic translation initiation factor 6 (tif6).